The following is a 305-amino-acid chain: MTSIHVQVPATTANIGAGFDCLGAALSLHNQFQFRLAGESEPFFSLELVGADVETQKLEATADNLLYRAFAKVFATLGQPVPHVNIAIDLKVPLSRGLGSSATAIVGGLVGANALAGSPLSQREIMNLAIEMEGHPDNVVPALLGGCQLSVKHQQDWVICPWVWHENVVPVVAIPDFELSTEEARAVLPQQYARAQAIFNASRLGLLPHGLAQNNPEYLTAALDDQIHQPYRKNLIKGYDPVQQAAIAAGAYGMVISGAGPTLLALAAPENAPKVATAMQTAWEGIGVKAIAHVLEIDQQGTVIL.

ATP is bound at residue 93 to 103 (PLSRGLGSSAT).

Belongs to the GHMP kinase family. Homoserine kinase subfamily.

The protein localises to the cytoplasm. It catalyses the reaction L-homoserine + ATP = O-phospho-L-homoserine + ADP + H(+). The protein operates within amino-acid biosynthesis; L-threonine biosynthesis; L-threonine from L-aspartate: step 4/5. In terms of biological role, catalyzes the ATP-dependent phosphorylation of L-homoserine to L-homoserine phosphate. This is Homoserine kinase from Picosynechococcus sp. (strain ATCC 27264 / PCC 7002 / PR-6) (Agmenellum quadruplicatum).